Reading from the N-terminus, the 508-residue chain is Protein adenylyltransferase Fic (508 aa).

The helical transmembrane segment at Phe48 to Ser70 threads the bilayer. TPR repeat units lie at residues Ala132–His165 and Pro166–Asn200. Residues Ser257–Gly262 carry the Inhibitory (S/T)XXXE(G/N) motif motif. ATP contacts are provided by residues Glu261 and Val342–His345. In terms of domain architecture, Fido spans Ile311 to Asp446. Residue His389 is part of the active site. ATP is bound by residues Asp393–Arg400, Tyr425–Tyr426, and Asn433.

It belongs to the fic family. Homodimer.

Its subcellular location is the membrane. It catalyses the reaction L-tyrosyl-[protein] + ATP = O-(5'-adenylyl)-L-tyrosyl-[protein] + diphosphate. The enzyme catalyses L-threonyl-[protein] + ATP = 3-O-(5'-adenylyl)-L-threonyl-[protein] + diphosphate. It carries out the reaction 3-O-(5'-adenylyl)-L-threonyl-[protein] + H2O = L-threonyl-[protein] + AMP + H(+). Its activity is regulated as follows. The side chain of Glu-261 determines which of the two opposing activities (AMPylase or de-AMPylase) will take place. In response to endoplasmic reticulum stress, mediates de-AMPylase activity. Adenylyltransferase activity is inhibited by the inhibitory helix present at the N-terminus: Glu-261 binds ATP and competes with ATP-binding at Arg-400, thereby preventing adenylyltransferase activity. In unstressed cells, disengagement of Glu-261 promotes adenylyltransferase activity. Activation dissociates ATP-binding from Glu-261, allowing ordered binding of the entire ATP moiety with the alpha-phosphate in an orientation that is productive for accepting an incoming target hydroxyl side chain. Protein that can both mediate the addition of adenosine 5'-monophosphate (AMP) to specific residues of target proteins (AMPylation), and the removal of the same modification from target proteins (de-AMPylation), depending on the context. The side chain of Glu-261 determines which of the two opposing activities (AMPylase or de-AMPylase) will take place. Acts as a key regulator of the unfolded protein response (UPR) by mediating AMPylation or de-AMPylation of Hsc70-3/BiP. In unstressed cells, acts as an adenylyltransferase by mediating AMPylation of Hsc70-3/BiP at 'Thr-518', thereby inactivating it. In response to endoplasmic reticulum stress, acts as a phosphodiesterase by mediating removal of ATP (de-AMPylation) from Hsc70-3/BiP at 'Thr-518', leading to restore HSPA5/BiP activity. The polypeptide is Protein adenylyltransferase Fic (Drosophila persimilis (Fruit fly)).